Here is a 210-residue protein sequence, read N- to C-terminus: Dephospho-CoA kinase (210 aa).

The region spanning 4 to 201 (IVALTGGICS…NFYIYLSKQN (198 aa)) is the DPCK domain. ATP is bound at residue 12–17 (CSGKTT).

It belongs to the CoaE family.

Its subcellular location is the cytoplasm. It carries out the reaction 3'-dephospho-CoA + ATP = ADP + CoA + H(+). Its pathway is cofactor biosynthesis; coenzyme A biosynthesis; CoA from (R)-pantothenate: step 5/5. Catalyzes the phosphorylation of the 3'-hydroxyl group of dephosphocoenzyme A to form coenzyme A. This Buchnera aphidicola subsp. Schizaphis graminum (strain Sg) protein is Dephospho-CoA kinase.